The sequence spans 69 residues: Large ribosomal subunit protein bL28 (69 aa).

Belongs to the bacterial ribosomal protein bL28 family.

The polypeptide is Large ribosomal subunit protein bL28 (Desulfovibrio desulfuricans (strain ATCC 27774 / DSM 6949 / MB)).